Reading from the N-terminus, the 111-residue chain is Cytochrome c (111 aa).

Alanine 1 is modified (N-acetylalanine). Heme c-binding residues include cysteine 22, cysteine 25, and histidine 26. The residue at position 80 (lysine 80) is an N6,N6,N6-trimethyllysine. Methionine 88 serves as a coordination point for heme c. An N6,N6,N6-trimethyllysine modification is found at lysine 94.

Belongs to the cytochrome c family. Post-translationally, binds 1 heme c group covalently per subunit.

Its subcellular location is the mitochondrion intermembrane space. In terms of biological role, electron carrier protein. The oxidized form of the cytochrome c heme group can accept an electron from the heme group of the cytochrome c1 subunit of cytochrome reductase. Cytochrome c then transfers this electron to the cytochrome oxidase complex, the final protein carrier in the mitochondrial electron-transport chain. The sequence is that of Cytochrome c from Guizotia abyssinica (Niger).